A 189-amino-acid polypeptide reads, in one-letter code: Thymidine kinase (189 aa).

Residues 9-16 (GTMNSGKT) and 85-88 (DESQ) contribute to the ATP site. Glu86 (proton acceptor) is an active-site residue. Residues Cys143, Cys146, Cys180, and His183 each coordinate Zn(2+).

It belongs to the thymidine kinase family. As to quaternary structure, homotetramer.

Its subcellular location is the cytoplasm. It catalyses the reaction thymidine + ATP = dTMP + ADP + H(+). In Streptococcus pyogenes serotype M18 (strain MGAS8232), this protein is Thymidine kinase.